The primary structure comprises 333 residues: Holliday junction branch migration complex subunit RuvB (333 aa).

A large ATPase domain (RuvB-L) region spans residues 1-182 (MEERIVSAEA…FGVMARLEYY (182 aa)). Residues Leu-21, Arg-22, Gly-63, Lys-66, Thr-67, Thr-68, 129–131 (EDF), Arg-172, Tyr-182, and Arg-219 contribute to the ATP site. Thr-67 is a Mg(2+) binding site. A small ATPAse domain (RuvB-S) region spans residues 183–253 (KPEELAQIVE…RACSALEQLH (71 aa)). The interval 256–333 (PLGLDHIDDK…AHYGVEKQNG (78 aa)) is head domain (RuvB-H). Residues Arg-311 and Arg-316 each contribute to the DNA site.

This sequence belongs to the RuvB family. Homohexamer. Forms an RuvA(8)-RuvB(12)-Holliday junction (HJ) complex. HJ DNA is sandwiched between 2 RuvA tetramers; dsDNA enters through RuvA and exits via RuvB. An RuvB hexamer assembles on each DNA strand where it exits the tetramer. Each RuvB hexamer is contacted by two RuvA subunits (via domain III) on 2 adjacent RuvB subunits; this complex drives branch migration. In the full resolvosome a probable DNA-RuvA(4)-RuvB(12)-RuvC(2) complex forms which resolves the HJ.

The protein localises to the cytoplasm. It carries out the reaction ATP + H2O = ADP + phosphate + H(+). In terms of biological role, the RuvA-RuvB-RuvC complex processes Holliday junction (HJ) DNA during genetic recombination and DNA repair, while the RuvA-RuvB complex plays an important role in the rescue of blocked DNA replication forks via replication fork reversal (RFR). RuvA specifically binds to HJ cruciform DNA, conferring on it an open structure. The RuvB hexamer acts as an ATP-dependent pump, pulling dsDNA into and through the RuvAB complex. RuvB forms 2 homohexamers on either side of HJ DNA bound by 1 or 2 RuvA tetramers; 4 subunits per hexamer contact DNA at a time. Coordinated motions by a converter formed by DNA-disengaged RuvB subunits stimulates ATP hydrolysis and nucleotide exchange. Immobilization of the converter enables RuvB to convert the ATP-contained energy into a lever motion, pulling 2 nucleotides of DNA out of the RuvA tetramer per ATP hydrolyzed, thus driving DNA branch migration. The RuvB motors rotate together with the DNA substrate, which together with the progressing nucleotide cycle form the mechanistic basis for DNA recombination by continuous HJ branch migration. Branch migration allows RuvC to scan DNA until it finds its consensus sequence, where it cleaves and resolves cruciform DNA. The sequence is that of Holliday junction branch migration complex subunit RuvB from Shouchella clausii (strain KSM-K16) (Alkalihalobacillus clausii).